Reading from the N-terminus, the 458-residue chain is Transcription factor PCF5 (458 aa).

Disordered stretches follow at residues 1 to 103 (MGDA…RGPR), 159 to 182 (GAGA…ENSD), 278 to 299 (MFHH…TTQQ), and 424 to 458 (RLPA…ASHH). Residues 65-74 (RGGGGGGGGE) show a composition bias toward gly residues. The TCP domain maps to 89-147 (RKDRHSKVCTARGPRDRRVRLSAHTAIQFYDVQDRLGYDRPSKAVDWLIKNAKDAIDKL).

As to quaternary structure, forms homodimers and heterodimers.

The protein localises to the nucleus. Its function is as follows. Transcription activator. Binds the promoter core sequence 5'-GGNCC-3'. This chain is Transcription factor PCF5 (PCF5), found in Oryza sativa subsp. japonica (Rice).